The chain runs to 233 residues: Ycf53-like protein (233 aa).

Belongs to the ycf53 family.

This chain is Ycf53-like protein, found in Synechocystis sp. (strain ATCC 27184 / PCC 6803 / Kazusa).